A 911-amino-acid chain; its full sequence is Protein translocase subunit SecA (911 aa).

ATP-binding positions include Q87, 105 to 109 (GEGKT), and D499. Zn(2+)-binding residues include C895, C897, C906, and H907.

This sequence belongs to the SecA family. As to quaternary structure, monomer and homodimer. Part of the essential Sec protein translocation apparatus which comprises SecA, SecYEG and auxiliary proteins SecDF-YajC and YidC. The cofactor is Zn(2+).

It localises to the cell inner membrane. The protein localises to the cytoplasm. The enzyme catalyses ATP + H2O + cellular proteinSide 1 = ADP + phosphate + cellular proteinSide 2.. Part of the Sec protein translocase complex. Interacts with the SecYEG preprotein conducting channel. Has a central role in coupling the hydrolysis of ATP to the transfer of proteins into and across the cell membrane, serving both as a receptor for the preprotein-SecB complex and as an ATP-driven molecular motor driving the stepwise translocation of polypeptide chains across the membrane. The polypeptide is Protein translocase subunit SecA (Novosphingobium aromaticivorans (strain ATCC 700278 / DSM 12444 / CCUG 56034 / CIP 105152 / NBRC 16084 / F199)).